Reading from the N-terminus, the 255-residue chain is Imidazole glycerol phosphate synthase subunit HisF (255 aa).

Catalysis depends on residues aspartate 11 and aspartate 130.

This sequence belongs to the HisA/HisF family. As to quaternary structure, heterodimer of HisH and HisF.

The protein resides in the cytoplasm. It carries out the reaction 5-[(5-phospho-1-deoxy-D-ribulos-1-ylimino)methylamino]-1-(5-phospho-beta-D-ribosyl)imidazole-4-carboxamide + L-glutamine = D-erythro-1-(imidazol-4-yl)glycerol 3-phosphate + 5-amino-1-(5-phospho-beta-D-ribosyl)imidazole-4-carboxamide + L-glutamate + H(+). It functions in the pathway amino-acid biosynthesis; L-histidine biosynthesis; L-histidine from 5-phospho-alpha-D-ribose 1-diphosphate: step 5/9. Its function is as follows. IGPS catalyzes the conversion of PRFAR and glutamine to IGP, AICAR and glutamate. The HisF subunit catalyzes the cyclization activity that produces IGP and AICAR from PRFAR using the ammonia provided by the HisH subunit. The sequence is that of Imidazole glycerol phosphate synthase subunit HisF from Rhodopseudomonas palustris (strain BisB5).